The primary structure comprises 185 residues: 16S rRNA aminocarboxypropyltransferase (185 aa).

Residues threonine 19, isoleucine 69, leucine 93, tyrosine 108, and threonine 112 each contribute to the S-adenosyl-L-methionine site.

This sequence belongs to the TDD superfamily. TSR3 family.

It localises to the cytoplasm. It carries out the reaction an N(1)-methylpseudouridine in rRNA + S-adenosyl-L-methionine = N(1)-methyl-N(3)-[(3S)-3-amino-3-carboxypropyl]pseudouridine in rRNA + S-methyl-5'-thioadenosine + H(+). Its function is as follows. Aminocarboxypropyltransferase that catalyzes the aminocarboxypropyl transfer on pseudouridine corresponding to position 914 in M.jannaschii 16S rRNA. It constitutes the last step in biosynthesis of the hypermodified N1-methyl-N3-(3-amino-3-carboxypropyl) pseudouridine (m1acp3-Psi). The polypeptide is 16S rRNA aminocarboxypropyltransferase (Vulcanisaeta distributa (strain DSM 14429 / JCM 11212 / NBRC 100878 / IC-017)).